The following is an 856-amino-acid chain: MFTLIFLFLFLNIPLLVADFISPRCFWKMKQNEYRDRHHGTGCIFLILAIQQPVKKEYFSHILNIQTHTENHKYALALAFSIYEINRNPDLLPNMSLIFIFSADSCEWESELSLIRFGLQNSDNLPNYLCEELTKCILALTNMNWATTVTLHTILSNFLSDQLLHITYGTFHPALSDHEKFPYLHQMASDHTSLALALVSFIIHFGWNWVGLVISDSDQGIQFLSYLRREMEKYTLCFAFVNMIPLNINLYMSRAEVYYNQIMTSSTNVVIIYGDTDSTLAVSFRMWESLGIQRLWITTSQWDVSPSMKDFTFGNKYGTFAFEQHHSEISGFKHFVQTLNSVKCPDEYLVKLEWMHFNCEVSASKCKTLKNCSSNHSLKWLMVHTFDMAFIEESYYIYNAVYAFAHVLHQFTFQKFDNLPKDNGKEHNYSCKKLYSYLRKNHFINPVGDRVSMNQRDKLQEEYDIVYIWNFPQGLGLRVKIGMFSPYFPNGQQVHLSEDMLKWARGSTQVPTSMCSADCGPGSRKFRMDGMAACCFHCKPCPENEISNETNVDNCVQCPEDQYANTEQNHCIRKAVVFLSYEEPLGVALSLLSLCFSAFTTVVLGIFVKHHNTPIVKANNRTLTYLLLISLIFCFLCPLLFIGHPNSATCILQQLTFGVVFTVSLSTVLAKTITVVLAFKIIASQRMMKYFLISGAINYIIPICILIQVIVCAVWLRASPPSVDIDAHSEHGQIIIVCHKGSVNAFYCVLGYLAILAFGSFTLAFLSRNLPGAFNEAKSITFSMLVFCSVWVTFIPVYHSTKGKVMVAVEIFSTLASSAGMLGCIFVPKCYTILFRQDQNSLEMIRVKSSSNVHVS.

Residues 1 to 18 (MFTLIFLFLFLNIPLLVA) form the signal peptide. The Extracellular portion of the chain corresponds to 19–586 (DFISPRCFWK…VFLSYEEPLG (568 aa)). Asn-94 carries an N-linked (GlcNAc...) asparagine glycan. Residues 587–607 (VALSLLSLCFSAFTTVVLGIF) form a helical membrane-spanning segment. The Cytoplasmic portion of the chain corresponds to 608-622 (VKHHNTPIVKANNRT). A helical transmembrane segment spans residues 623 to 643 (LTYLLLISLIFCFLCPLLFIG). At 644–658 (HPNSATCILQQLTFG) the chain is on the extracellular side. Residues 659-679 (VVFTVSLSTVLAKTITVVLAF) traverse the membrane as a helical segment. Topologically, residues 680–690 (KIIASQRMMKY) are cytoplasmic. A helical membrane pass occupies residues 691–711 (FLISGAINYIIPICILIQVIV). The Extracellular portion of the chain corresponds to 712-745 (CAVWLRASPPSVDIDAHSEHGQIIIVCHKGSVNA). Residues 746–766 (FYCVLGYLAILAFGSFTLAFL) form a helical membrane-spanning segment. Topologically, residues 767 to 778 (SRNLPGAFNEAK) are cytoplasmic. The chain crosses the membrane as a helical span at residues 779-799 (SITFSMLVFCSVWVTFIPVYH). Residues 800 to 806 (STKGKVM) are Extracellular-facing. A helical transmembrane segment spans residues 807–827 (VAVEIFSTLASSAGMLGCIFV). Over 828-856 (PKCYTILFRQDQNSLEMIRVKSSSNVHVS) the chain is Cytoplasmic.

It belongs to the G-protein coupled receptor 3 family. In terms of tissue distribution, expressed in the vomeronasal organ.

It localises to the cell membrane. Functionally, receptor for the Esp1 pheromone. Mediates the response to Esp1 which enhances female sexual receptive behavior (lordosis) upon male mounting, resulting in successful copulation. This is Vomeronasal type-2 receptor 116 from Mus musculus (Mouse).